The primary structure comprises 43 residues: Thaumatin-like protein 1 (43 aa).

This sequence belongs to the thaumatin family.

In Glebionis coronaria (Crown daisy), this protein is Thaumatin-like protein 1.